Consider the following 516-residue polypeptide: DNA-(apurinic or apyrimidinic site) endonuclease 2 (516 aa).

N8 and E47 together coordinate Mg(2+). Y155 is an active-site residue. The Mg(2+) site is built by D196, N198, D302, and H303. D196 acts as the Proton donor/acceptor in catalysis. Catalysis depends on H303, which acts as the Proton acceptor. Residues 357–366 (QPSHQIQAQR) show a composition bias toward polar residues. The interval 357–389 (QPSHQIQAQRQPRKACMHSTRLRKSQGGPKRKQ) is disordered. The span at 367-389 (QPRKACMHSTRLRKSQGGPKRKQ) shows a compositional bias: basic residues. K370 is covalently cross-linked (Glycyl lysine isopeptide (Lys-Gly) (interchain with G-Cter in ubiquitin)). Residues 389 to 396 (QKNLMSYF) are required for the interaction and colocalization with PCNA in nuclear foci in presence of oxidative-induced DNA damaging agents. Positions 467, 470, 493, and 507 each coordinate Zn(2+). Residues 467–516 (CGGHREPCVMRTVKKTGPNFGRQFYMCARPRGPPSDPSSRCNFFLWSRPS) form a GRF-type zinc finger.

This sequence belongs to the DNA repair enzymes AP/ExoA family. Interacts with PCNA. This interaction is increased by misincorporation of uracil in nuclear DNA. Requires Mg(2+) as cofactor. It depends on Mn(2+) as a cofactor. Ubiquitinated by the CUL9-RBX1 complex. Ubiquitinated by MKRN3 at Lys-370 leading to proteasomal degradation. As to expression, expressed in lymphocytes, thymocytes and splenocytes (at protein level). Highly expressed in the thymus and weakly expressed in the bone marrow, spleen, eye, kidney, lung, brain and uterus.

The protein localises to the nucleus. The protein resides in the cytoplasm. It is found in the mitochondrion. The enzyme catalyses Exonucleolytic cleavage in the 3'- to 5'-direction to yield nucleoside 5'-phosphates.. With respect to regulation, 3'-5' exonuclease activity is activated by sodium and manganese. 3'-5' exonuclease and 3'-phosphodiesterase activities are stimulated in presence of PCNA. Its function is as follows. Functions as a weak apurinic/apyrimidinic (AP) endodeoxyribonuclease in the DNA base excision repair (BER) pathway of DNA lesions induced by oxidative and alkylating agents. Initiates repair of AP sites in DNA by catalyzing hydrolytic incision of the phosphodiester backbone immediately adjacent to the damage, generating a single-strand break with 5'-deoxyribose phosphate and 3'-hydroxyl ends. Also displays double-stranded DNA 3'-5' exonuclease, 3'-phosphodiesterase activities. Shows robust 3'-5' exonuclease activity on 3'-recessed heteroduplex DNA and is able to remove mismatched nucleotides preferentially. Shows fairly strong 3'-phosphodiesterase activity involved in the removal of 3'-damaged termini formed in DNA by oxidative agents. In the nucleus functions in the PCNA-dependent BER pathway. Plays a role in reversing blocked 3' DNA ends, problematic lesions that preclude DNA synthesis. Required for somatic hypermutation (SHM) and DNA cleavage step of class switch recombination (CSR) of immunoglobulin genes. Required for proper cell cycle progression during proliferation of peripheral lymphocytes. The protein is DNA-(apurinic or apyrimidinic site) endonuclease 2 (Apex2) of Mus musculus (Mouse).